The sequence spans 575 residues: Proline--tRNA ligase (575 aa).

This sequence belongs to the class-II aminoacyl-tRNA synthetase family. ProS type 1 subfamily. Homodimer.

The protein resides in the cytoplasm. It carries out the reaction tRNA(Pro) + L-proline + ATP = L-prolyl-tRNA(Pro) + AMP + diphosphate. In terms of biological role, catalyzes the attachment of proline to tRNA(Pro) in a two-step reaction: proline is first activated by ATP to form Pro-AMP and then transferred to the acceptor end of tRNA(Pro). As ProRS can inadvertently accommodate and process non-cognate amino acids such as alanine and cysteine, to avoid such errors it has two additional distinct editing activities against alanine. One activity is designated as 'pretransfer' editing and involves the tRNA(Pro)-independent hydrolysis of activated Ala-AMP. The other activity is designated 'posttransfer' editing and involves deacylation of mischarged Ala-tRNA(Pro). The misacylated Cys-tRNA(Pro) is not edited by ProRS. The polypeptide is Proline--tRNA ligase (Pseudothermotoga lettingae (strain ATCC BAA-301 / DSM 14385 / NBRC 107922 / TMO) (Thermotoga lettingae)).